Here is a 413-residue protein sequence, read N- to C-terminus: Cell division protein FtsZ 2 (413 aa).

GTP contacts are provided by residues Gly132 to Gly134, Glu171, Arg175, and Asp218.

The protein belongs to the FtsZ family. In terms of assembly, homodimer. Polymerizes to form a dynamic ring structure in a strictly GTP-dependent manner. Interacts directly with several other division proteins.

Its subcellular location is the cytoplasm. Functionally, essential cell division protein that forms a contractile ring structure (Z ring) at the future cell division site. The regulation of the ring assembly controls the timing and the location of cell division. One of the functions of the FtsZ ring is to recruit other cell division proteins to the septum to produce a new cell wall between the dividing cells. Binds GTP and shows GTPase activity. This chain is Cell division protein FtsZ 2, found in Thermococcus kodakarensis (strain ATCC BAA-918 / JCM 12380 / KOD1) (Pyrococcus kodakaraensis (strain KOD1)).